We begin with the raw amino-acid sequence, 1553 residues long: Dual oxidase 1 (1553 aa).

The N-terminal stretch at 1-21 (MGFRLALAWTLLVGPWMPMGA) is a signal peptide. Topologically, residues 22–596 (RNSISWEVQR…YFKGSGFGFG (575 aa)) are extracellular. The peroxidase-like; mediates peroxidase activity stretch occupies residues 26 to 593 (SWEVQRFDGW…MRDYFKGSGF (568 aa)). Residues Asn94, Asn342, Asn354, and Asn534 are each glycosylated (N-linked (GlcNAc...) asparagine). The helical transmembrane segment at 597–617 (VTIGTLCCFPLVSLLSAWIVA) threads the bilayer. The Cytoplasmic segment spans residues 618-1046 (QLRRRNFKRL…KRFVENYRRH (429 aa)). EF-hand domains are found at residues 815-850 (PQDMFVESMFSLADKDGNGYLSFREFLDILVVFMKG), 851-886 (SPEEKSRLMFRMYDFDGNGLISKDEFIRMLRSFIEI), and 895-930 (QLTEVVESMFREAGFQDKQELTWEDFHFMLRDHDSE). Ca(2+) is bound by residues Asp828, Asp830, Asn832, Tyr834, Glu839, Asp864, Asp866, Asn868, and Glu875. Residues 956 to 1250 (YISQEKLCPS…GSFALIQLPR (295 aa)) are interaction with TXNDC11. Residues 1047-1067 (IGCLAVFYTIAGGLFLERAYY) form a helical membrane-spanning segment. At 1068 to 1082 (YAFAAHHMGITDTTR) the chain is on the extracellular side. Residues 1083–1103 (VGIILSRGTAASISFMFSYIL) traverse the membrane as a helical segment. Residues 1089 to 1271 (RGTAASISFM…YVGDKLVSLS (183 aa)) form the Ferric oxidoreductase domain. At 1104-1138 (LTMCRNLITFLRETFLNRYVPFDAAVDFHRLIAST) the chain is on the cytoplasmic side. A helical membrane pass occupies residues 1139–1159 (AIILTVLHSAGHVVNVYLFSI). Residues 1160–1190 (SPLSVLSCLFPGLFHDNGSEFPQKYYWWFFQ) lie on the Extracellular side of the membrane. A helical membrane pass occupies residues 1191 to 1211 (TVPGLTGVMLLLILAIMYVFA). Residues 1212-1228 (SHHFRRCSFRGFWLTHH) lie on the Cytoplasmic side of the membrane. The helical transmembrane segment at 1229-1249 (LYILLYMLLIIHGSFALIQLP) threads the bilayer. Arg1250 is a topological domain (extracellular). Residues 1251-1271 (FHIFFLVPALIYVGDKLVSLS) traverse the membrane as a helical segment. Positions 1272-1378 (RKKVEISVVK…DGPFGEGHQE (107 aa)) constitute an FAD-binding FR-type domain. Residues 1272–1553 (RKKVEISVVK…THFSHHYENF (282 aa)) lie on the Cytoplasmic side of the membrane.

This sequence in the N-terminal section; belongs to the peroxidase family. In terms of assembly, interacts with TXNDC11, TPO and CYBA. N-glycosylated. In terms of tissue distribution, specifically expressed in thyroid.

The protein resides in the apical cell membrane. It carries out the reaction NADH + O2 + H(+) = H2O2 + NAD(+). The enzyme catalyses NADPH + O2 + H(+) = H2O2 + NADP(+). It participates in hormone biosynthesis; thyroid hormone biosynthesis. Its activity is regulated as follows. The NADPH oxidase activity is calcium-dependent. Peroxidase activity is inhibited by aminobenzohydrazide. Generates hydrogen peroxide which is required for the activity of thyroid peroxidase/TPO and lactoperoxidase/LPO. Plays a role in thyroid hormones synthesis and lactoperoxidase-mediated antimicrobial defense at the surface of mucosa. May have its own peroxidase activity through its N-terminal peroxidase-like domain. The sequence is that of Dual oxidase 1 (DUOX1) from Sus scrofa (Pig).